Here is a 124-residue protein sequence, read N- to C-terminus: Large ribosomal subunit protein eL33 (124 aa).

An N-acetylalanine modification is found at A2.

The protein belongs to the eukaryotic ribosomal protein eL33 family.

This chain is Large ribosomal subunit protein eL33, found in Caenorhabditis elegans.